Reading from the N-terminus, the 1321-residue chain is Bile salt export pump (1321 aa).

The Cytoplasmic segment spans residues 1–62 (MSDSVILRSV…FSSSKDIWLM (62 aa)). The region spanning 62-385 (MLMGGVCALL…ASSCLEIFST (324 aa)) is the ABC transmembrane type-1 1 domain. Residues 63–83 (LMGGVCALLHGMAQPGILIIF) traverse the membrane as a helical segment. Residues 84 to 147 (GIMTDIFIKY…MIKFSGIYAG (64 aa)) lie on the Extracellular side of the membrane. 4 N-linked (GlcNAc...) asparagine glycosylation sites follow: N109, N116, N122, and N125. Residues 148 to 168 (VGMTVLILGYFQIRLWVITGA) traverse the membrane as a helical segment. Over 169–215 (RQIRRMRKIYFRRIMRMEIGWFDCTSVGELNSRFADDIEKINDAIAD) the chain is Cytoplasmic. A helical transmembrane segment spans residues 216 to 236 (QLAHFLQRMSTAMCGLLLGFY). Topologically, residues 237 to 240 (RGWK) are extracellular. The helical transmembrane segment at 241-261 (LTLVILAVSPLIGIGAAVIGL) threads the bilayer. Topologically, residues 262–319 (SIAKFTELELKAYAKAGSIADEVLSSIRTVAAFGGENKEVERYEKNLVFAQRWGIWKG) are cytoplasmic. A helical membrane pass occupies residues 320–340 (MVMGFFTGYMWCLIFFCYALA). The Extracellular segment spans residues 341–353 (FWYGSTLVLDEEE). The chain crosses the membrane as a helical span at residues 354–374 (YTPGTLVQIFLCVILAAMNIG). Residues 375–755 (HASSCLEIFS…KYNIPEWHYI (381 aa)) are Cytoplasmic-facing. An ABC transporter 1 domain is found at 420 to 656 (IEFHNVTFHY…KGVYFMLVTL (237 aa)). 455 to 462 (GSSGAGKS) provides a ligand contact to ATP. At T586 the chain carries Phosphothreonine. S587 is modified (phosphoserine). The segment at 651-674 (FMLVTLQSQGDNAHKETSIMGKDA) is interaction with HAX1. S692, S703, and S706 each carry phosphoserine. An ABC transmembrane type-1 2 domain is found at 755-1043 (ILVGSLSAAI…TFSYTPSYAK (289 aa)). A helical transmembrane segment spans residues 756–776 (LVGSLSAAINGAVTPIYSLLF). Over 777–794 (SQLLGTFSLLDKEQQRSE) the chain is Extracellular. A helical membrane pass occupies residues 795–815 (IHSMCLFFVILGCVSIFTQFL). The Cytoplasmic segment spans residues 816–869 (QGYTFAKSGELLTKRLRKFGFKAMLGQDIGWFDDLRNNPGVLTTRLATDASQVQ). A run of 2 helical transmembrane segments spans residues 870–890 (GATG…IAAL) and 891–911 (LIAF…FPFL). Topologically, residues 912-979 (ALSGAVQTKM…SYKTAVRKAN (68 aa)) are cytoplasmic. Residues 980–1000 (IYGLCFAFSQGIAFLANSAAY) form a helical membrane-spanning segment. The Extracellular portion of the chain corresponds to 1001-1011 (RYGGYLIAYEG). A helical transmembrane segment spans residues 1012–1032 (LGFSHVFRVVSSVALSATAVG). Residues 1033-1321 (RTFSYTPSYA…KLVITGAPIS (289 aa)) are Cytoplasmic-facing. The ABC transporter 2 domain maps to 1078-1316 (IDFIDCKFTY…KGAYYKLVIT (239 aa)). 1113–1120 (GSSGCGKS) is a binding site for ATP. S1321 carries the phosphoserine modification.

The protein belongs to the ABC transporter superfamily. ABCB family. Multidrug resistance exporter (TC 3.A.1.201) subfamily. In terms of assembly, interacts with HAX1. Interacts with the adapter protein complex 2 (AP-2) throught AP2A2 or AP2A1; this interaction regulates cell membrane expression of ABCB11 through its internalization in a clathrin-dependent manner and its subsequent degradation. Ubiquitinated; short-chain ubiquitination regulates cell-Surface expression of ABCB11. Post-translationally, N-glycosylated. In terms of tissue distribution, expressed predominantly, if not exclusively in the liver, where it was further localized to the canalicular microvilli and to subcanalicular vesicles of the hepatocytes by in situ.

The protein localises to the apical cell membrane. It is found in the recycling endosome membrane. It localises to the endosome. Its subcellular location is the cell membrane. It catalyses the reaction cholate(in) + ATP + H2O = cholate(out) + ADP + phosphate + H(+). The catalysed reaction is taurocholate(in) + ATP + H2O = taurocholate(out) + ADP + phosphate + H(+). The enzyme catalyses glycocholate(in) + ATP + H2O = glycocholate(out) + ADP + phosphate + H(+). It carries out the reaction glycochenodeoxycholate(in) + ATP + H2O = glycochenodeoxycholate(out) + ADP + phosphate + H(+). It catalyses the reaction taurochenodeoxycholate(in) + ATP + H2O = taurochenodeoxycholate(out) + ADP + phosphate + H(+). The catalysed reaction is glycoursodeoxycholate(in) + ATP + H2O = glycoursodeoxycholate(out) + ADP + phosphate + H(+). The enzyme catalyses tauroursodeoxycholate(in) + ATP + H2O = tauroursodeoxycholate(out) + ADP + phosphate + H(+). It carries out the reaction taurodeoxycholate(in) + ATP + H2O = taurodeoxycholate(out) + ADP + phosphate + H(+). It catalyses the reaction pravastatin(in) + ATP + H2O = pravastatin(out) + ADP + phosphate + H(+). The uptake of taurocholate is inhibited by taurolithocholate sulfate with an IC(50) of 52.9 uM. Pravastatin competitively inhibits the transport of taurocholic acid. Cyclosporin A, glibenclamide, rifampicin and troglitazonestrongly competitively inhibit the transport activity of taurocholate. The canalicular transport activity of taurocholate is strongly dependent on canalicular membrane cholesterol content. The uptake of taurocholate is increased by short- and medium-chain fatty acids. Cholesterol increases transport capacity of taurocholate without affecting the affinity for the substrate. Its function is as follows. Catalyzes the transport of the major hydrophobic bile salts, such as taurine and glycine-conjugated cholic acid across the canalicular membrane of hepatocytes in an ATP-dependent manner, therefore participates in hepatic bile acid homeostasis and consequently to lipid homeostasis through regulation of biliary lipid secretion in a bile salts dependent manner. Transports taurine-conjugated bile salts more rapidly than glycine-conjugated bile salts. Also transports non-bile acid compounds, such as pravastatin and fexofenadine in an ATP-dependent manner and may be involved in their biliary excretion. The protein is Bile salt export pump of Rattus norvegicus (Rat).